Here is a 334-residue protein sequence, read N- to C-terminus: Malate dehydrogenase 2 (334 aa).

19-25 contacts NAD(+); that stretch reads IGAGKVG. Substrate contacts are provided by Arg-100 and Arg-106. NAD(+) contacts are provided by residues Asn-113 and 136-138; that span reads VSN. Positions 138 and 169 each coordinate substrate. The Proton acceptor role is filled by His-193.

This sequence belongs to the LDH/MDH superfamily.

The enzyme catalyses (S)-malate + NAD(+) = oxaloacetate + NADH + H(+). Its function is as follows. Catalyzes the reversible oxidation of malate to oxaloacetate. The sequence is that of Malate dehydrogenase 2 from Aquifex aeolicus (strain VF5).